A 293-amino-acid chain; its full sequence is ATP phosphoribosyltransferase (293 aa).

This sequence belongs to the ATP phosphoribosyltransferase family. Long subfamily. It depends on Mg(2+) as a cofactor.

It is found in the cytoplasm. It catalyses the reaction 1-(5-phospho-beta-D-ribosyl)-ATP + diphosphate = 5-phospho-alpha-D-ribose 1-diphosphate + ATP. The protein operates within amino-acid biosynthesis; L-histidine biosynthesis; L-histidine from 5-phospho-alpha-D-ribose 1-diphosphate: step 1/9. With respect to regulation, feedback inhibited by histidine. In terms of biological role, catalyzes the condensation of ATP and 5-phosphoribose 1-diphosphate to form N'-(5'-phosphoribosyl)-ATP (PR-ATP). Has a crucial role in the pathway because the rate of histidine biosynthesis seems to be controlled primarily by regulation of HisG enzymatic activity. The chain is ATP phosphoribosyltransferase from Nitratidesulfovibrio vulgaris (strain ATCC 29579 / DSM 644 / CCUG 34227 / NCIMB 8303 / VKM B-1760 / Hildenborough) (Desulfovibrio vulgaris).